We begin with the raw amino-acid sequence, 145 residues long: Flagellar assembly factor FliW (145 aa).

This sequence belongs to the FliW family. As to quaternary structure, interacts with translational regulator CsrA and flagellin(s).

It is found in the cytoplasm. Its function is as follows. Acts as an anti-CsrA protein, binds CsrA and prevents it from repressing translation of its target genes, one of which is flagellin. Binds to flagellin and participates in the assembly of the flagellum. In Exiguobacterium sp. (strain ATCC BAA-1283 / AT1b), this protein is Flagellar assembly factor FliW.